A 389-amino-acid chain; its full sequence is Chalcone synthase (389 aa).

Catalysis depends on residues Cys164, His303, and Asn336.

This sequence belongs to the thiolase-like superfamily. Chalcone/stilbene synthases family. As to quaternary structure, homodimer. In terms of tissue distribution, mainly expressed in flowers, to a lower extent in young leaves, and barely in mature leaves and twigs.

The enzyme catalyses (E)-4-coumaroyl-CoA + 3 malonyl-CoA + 3 H(+) = 2',4,4',6'-tetrahydroxychalcone + 3 CO2 + 4 CoA. Its pathway is secondary metabolite biosynthesis; flavonoid biosynthesis. The primary product of this enzyme is 4,2',4',6'-tetrahydroxychalcone (also termed naringenin-chalcone or chalcone) which can under specific conditions spontaneously isomerize into naringenin. The polypeptide is Chalcone synthase (Rhododendron dauricum (Azalea daurica)).